Here is a 184-residue protein sequence, read N- to C-terminus: UPF0398 protein BAA_1648 (184 aa).

This sequence belongs to the UPF0398 family.

The chain is UPF0398 protein BAA_1648 from Bacillus anthracis (strain A0248).